The chain runs to 117 residues: MNIFNILLPIVVLLLVFGLTAAIPDEKGLIFNLDNGELCLQTAQCKSGCCHRNSGVSLARCAPKAAETQKCSPLHIYGTYYFCPCESGLTCEVDRSIVGSITNTDYGYCEDQNNTTI.

Positions 1–22 (MNIFNILLPIVVLLLVFGLTAA) are cleaved as a signal peptide. 5 cysteine pairs are disulfide-bonded: C39–C50, C45–C61, C49–C83, C71–C91, and C85–C109.

This sequence belongs to the colipase family. Forms a 1:1 stoichiometric complex with pancreatic lipase.

It localises to the secreted. Its function is as follows. Colipase is a cofactor of pancreatic lipase. It allows the lipase to anchor itself to the lipid-water interface. Without colipase the enzyme is washed off by bile salts, which have an inhibitory effect on the lipase. The polypeptide is Colipase (clps) (Xenopus tropicalis (Western clawed frog)).